A 36-amino-acid polypeptide reads, in one-letter code: uncharacterized protein (36 aa).

This is an uncharacterized protein from Enterobacteria phage T4 (Bacteriophage T4).